We begin with the raw amino-acid sequence, 950 residues long: Coiled-coil domain-containing protein 80 (950 aa).

The first 21 residues, 1-21 (MTWRMGPRFTMLLAMWLVCGS), serve as a signal peptide directing secretion. Disordered regions lie at residues 28–64 (TIRG…IERS), 88–119 (PTEP…EMIR), and 289–609 (QVVA…QSPK). Basic and acidic residues-rich tracts occupy residues 104 to 119 (PEQR…EMIR) and 308 to 317 (SEKKKEDPRR). A compositionally biased stretch (low complexity) spans 348–374 (PRATTLPPAPATTVTRSTSRAVTVAAR). Polar residues predominate over residues 376 to 385 (MTTTAFPTTQ). Basic and acidic residues predominate over residues 418–428 (SRKDQHRERPQ). The span at 435–454 (KATSLESFTNAPPTTISEPS) shows a compositional bias: polar residues. 3 stretches are compositionally biased toward basic and acidic residues: residues 462–478 (RFRD…HRDP), 487–499 (PAKE…KAQD), and 538–582 (KKHE…EKEK). Glycyl lysine isopeptide (Lys-Gly) (interchain with G-Cter in SUMO2) cross-links involve residues K545 and K548. Residues 560–587 (DKLLKSEKQMKKSEKKSKQEKEKSKKKK) adopt a coiled-coil conformation. Polar residues predominate over residues 598–609 (KPTNKHFTQSPK).

The protein belongs to the CCDC80 family. Binds to various extracellular matrix proteins. Phosphorylated. Expressed in dermal papilla and dermal fibroblasts (at protein level). Expressed in heart, thymus, placenta, pancreas, colon, epithelium, spleen and osteoblasts.

Its subcellular location is the secreted. The protein localises to the extracellular space. It is found in the extracellular matrix. Functionally, promotes cell adhesion and matrix assembly. This is Coiled-coil domain-containing protein 80 (CCDC80) from Homo sapiens (Human).